Consider the following 386-residue polypeptide: Cytochrome b (386 aa).

4 helical membrane-spanning segments follow: residues 32–52, 76–98, 113–133, and 179–199; these read LGSL…FLAM, YLIR…AHIG, VWVI…LGYC, and FFAL…MHLM. Heme b is bound by residues histidine 82 and histidine 96. Residues histidine 183 and histidine 197 each contribute to the heme b site. Histidine 202 is an a ubiquinone binding site. The next 4 membrane-spanning stretches (helical) occupy residues 225–245, 289–309, 321–341, and 348–368; these read FVFK…LFVF, LGGV…PVTD, ISKT…QLGQ, and FIQL…FIVP.

This sequence belongs to the cytochrome b family. As to quaternary structure, fungal cytochrome b-c1 complex contains 10 subunits; 3 respiratory subunits, 2 core proteins and 5 low-molecular weight proteins. Cytochrome b-c1 complex is a homodimer. Requires heme b as cofactor.

The protein resides in the mitochondrion inner membrane. In terms of biological role, component of the ubiquinol-cytochrome c reductase complex (complex III or cytochrome b-c1 complex) that is part of the mitochondrial respiratory chain. The b-c1 complex mediates electron transfer from ubiquinol to cytochrome c. Contributes to the generation of a proton gradient across the mitochondrial membrane that is then used for ATP synthesis. This is Cytochrome b (COB) from Wickerhamomyces canadensis (Yeast).